Consider the following 103-residue polypeptide: Integration host factor subunit beta (103 aa).

Belongs to the bacterial histone-like protein family. As to quaternary structure, heterodimer of an alpha and a beta chain.

This protein is one of the two subunits of integration host factor, a specific DNA-binding protein that functions in genetic recombination as well as in transcriptional and translational control. This Rhizobium meliloti (strain 1021) (Ensifer meliloti) protein is Integration host factor subunit beta.